A 298-amino-acid chain; its full sequence is N-acetylmuramic acid 6-phosphate etherase (298 aa).

Residues 55-218 (ITESLRRGGR…STASMVRLGK (164 aa)) form the SIS domain. Catalysis depends on E83, which acts as the Proton donor. Residue E114 is part of the active site.

The protein belongs to the GCKR-like family. MurNAc-6-P etherase subfamily. Homodimer.

The catalysed reaction is N-acetyl-D-muramate 6-phosphate + H2O = N-acetyl-D-glucosamine 6-phosphate + (R)-lactate. It participates in amino-sugar metabolism; N-acetylmuramate degradation. Functionally, specifically catalyzes the cleavage of the D-lactyl ether substituent of MurNAc 6-phosphate, producing GlcNAc 6-phosphate and D-lactate. This is N-acetylmuramic acid 6-phosphate etherase from Mycolicibacterium smegmatis (strain ATCC 700084 / mc(2)155) (Mycobacterium smegmatis).